Here is a 116-residue protein sequence, read N- to C-terminus: Ribonuclease P protein component (116 aa).

This sequence belongs to the RnpA family. In terms of assembly, consists of a catalytic RNA component (M1 or rnpB) and a protein subunit.

The enzyme catalyses Endonucleolytic cleavage of RNA, removing 5'-extranucleotides from tRNA precursor.. RNaseP catalyzes the removal of the 5'-leader sequence from pre-tRNA to produce the mature 5'-terminus. It can also cleave other RNA substrates such as 4.5S RNA. The protein component plays an auxiliary but essential role in vivo by binding to the 5'-leader sequence and broadening the substrate specificity of the ribozyme. In Leuconostoc mesenteroides subsp. mesenteroides (strain ATCC 8293 / DSM 20343 / BCRC 11652 / CCM 1803 / JCM 6124 / NCDO 523 / NBRC 100496 / NCIMB 8023 / NCTC 12954 / NRRL B-1118 / 37Y), this protein is Ribonuclease P protein component.